Here is a 638-residue protein sequence, read N- to C-terminus: Eukaryotic translation initiation factor 2A (638 aa).

2 WD repeats span residues 287–329 (SKEG…FDFG) and 331–370 (GPRN…KLAN). Positions 441–450 (KITKAKHEGI) are enriched in basic and acidic residues. Residues 441-593 (KITKAKHEGI…SDKERKIRSV (153 aa)) are disordered. Phosphothreonine is present on Thr463. Over residues 492–501 (AAAGGVNGNK) the composition is skewed to low complexity. Residues 583–593 (ISDKERKIRSV) are compositionally biased toward basic and acidic residues.

The protein belongs to the WD repeat EIF2A family.

Its function is as follows. Functions in the early steps of protein synthesis of a small number of specific mRNAs. Acts by directing the binding of methionyl-tRNAi to 40S ribosomal subunits. In contrast to the eIF-2 complex, it binds methionyl-tRNAi to 40S subunits in a codon-dependent manner, whereas the eIF-2 complex binds methionyl-tRNAi to 40S subunits in a GTP-dependent manner. The protein is Eukaryotic translation initiation factor 2A of Drosophila melanogaster (Fruit fly).